We begin with the raw amino-acid sequence, 382 residues long: Nitric oxide reductase FlRd-NAD(+) reductase (382 aa).

Belongs to the FAD-dependent oxidoreductase family. The cofactor is FAD.

The protein localises to the cytoplasm. It carries out the reaction 2 reduced [nitric oxide reductase rubredoxin domain] + NAD(+) + H(+) = 2 oxidized [nitric oxide reductase rubredoxin domain] + NADH. Its pathway is nitrogen metabolism; nitric oxide reduction. Functionally, one of at least two accessory proteins for anaerobic nitric oxide (NO) reductase. Reduces the rubredoxin moiety of NO reductase. The sequence is that of Nitric oxide reductase FlRd-NAD(+) reductase from Vibrio vulnificus (strain YJ016).